A 625-amino-acid chain; its full sequence is Chaperone protein HtpG (625 aa).

Residues 1–339 are a; substrate-binding; that stretch reads MNKQTLSFQA…SSDLPLNVSR (339 aa). Residues 340–557 are b; the sequence is ELLQESRDVK…DGDISGHLAR (218 aa). A c region spans residues 558–625; that stretch reads LLKQAGQSAP…YVQRVNRLLV (68 aa).

This sequence belongs to the heat shock protein 90 family. As to quaternary structure, homodimer.

It is found in the cytoplasm. Functionally, molecular chaperone. Has ATPase activity. This Methylibium petroleiphilum (strain ATCC BAA-1232 / LMG 22953 / PM1) protein is Chaperone protein HtpG.